The following is a 683-amino-acid chain: DNA ligase (683 aa).

NAD(+) contacts are provided by residues 35 to 39 (DTEYD), 84 to 85 (SL), and Glu116. The active-site N6-AMP-lysine intermediate is the Lys118. NAD(+) is bound by residues Arg139, Glu176, Lys293, and Lys317. Zn(2+) is bound by residues Cys419, Cys422, Cys437, and Cys443. The 82-residue stretch at 602–683 (AGPQLLAGKT…LMKLLAKGVE (82 aa)) folds into the BRCT domain.

It belongs to the NAD-dependent DNA ligase family. LigA subfamily. Requires Mg(2+) as cofactor. Mn(2+) is required as a cofactor.

The enzyme catalyses NAD(+) + (deoxyribonucleotide)n-3'-hydroxyl + 5'-phospho-(deoxyribonucleotide)m = (deoxyribonucleotide)n+m + AMP + beta-nicotinamide D-nucleotide.. Functionally, DNA ligase that catalyzes the formation of phosphodiester linkages between 5'-phosphoryl and 3'-hydroxyl groups in double-stranded DNA using NAD as a coenzyme and as the energy source for the reaction. It is essential for DNA replication and repair of damaged DNA. In Dechloromonas aromatica (strain RCB), this protein is DNA ligase.